The sequence spans 665 residues: Methionine--tRNA ligase (665 aa).

The 'HIGH' region motif lies at 13–23; that stretch reads YYPSGKLHIGS. The short motif at 309–313 is the 'KMSKS' region element; sequence KMSKS. Lysine 312 contributes to the ATP binding site. A tRNA-binding domain is found at 562–665; the sequence is DFDKVEIRVA…PAVPNGSVIG (104 aa).

Belongs to the class-I aminoacyl-tRNA synthetase family. MetG type 2B subfamily. As to quaternary structure, homodimer.

It is found in the cytoplasm. The enzyme catalyses tRNA(Met) + L-methionine + ATP = L-methionyl-tRNA(Met) + AMP + diphosphate. In terms of biological role, is required not only for elongation of protein synthesis but also for the initiation of all mRNA translation through initiator tRNA(fMet) aminoacylation. In Streptococcus pneumoniae serotype 4 (strain ATCC BAA-334 / TIGR4), this protein is Methionine--tRNA ligase (metG).